Here is a 117-residue protein sequence, read N- to C-terminus: Small ribosomal subunit protein bS6m (117 aa).

This sequence belongs to the bacterial ribosomal protein bS6 family. Component of the mitochondrial small ribosomal subunit (mt-SSU). Mature N.crassa 74S mitochondrial ribosomes consist of a small (37S) and a large (54S) subunit. The 37S small subunit contains a 16S ribosomal RNA (16S mt-rRNA) and 32 different proteins. The 54S large subunit contains a 23S rRNA (23S mt-rRNA) and 42 different proteins.

It localises to the mitochondrion. Component of the mitochondrial ribosome (mitoribosome), a dedicated translation machinery responsible for the synthesis of mitochondrial genome-encoded proteins, including at least some of the essential transmembrane subunits of the mitochondrial respiratory chain. The mitoribosomes are attached to the mitochondrial inner membrane and translation products are cotranslationally integrated into the membrane. The polypeptide is Small ribosomal subunit protein bS6m (mrp17) (Neurospora crassa (strain ATCC 24698 / 74-OR23-1A / CBS 708.71 / DSM 1257 / FGSC 987)).